Consider the following 79-residue polypeptide: MSDKGRPLPKFGEWDVNDPASAEGFTVIFNKARDEKKTGGKPGSPGKSSEGHVKSGGGDPSKPQPKKWLCCMQAPAVDS.

The tract at residues 31–68 (KARDEKKTGGKPGSPGKSSEGHVKSGGGDPSKPQPKKW) is disordered. S44 is modified (phosphoserine).

It belongs to the RIN4 family. In terms of processing, proteolytic cleaved by P.syringae pv tomato AvrRpt2 after Gly-12; this cleavage is critical for subsequent proteasome-dependent elimination.

This Arabidopsis thaliana (Mouse-ear cress) protein is Protein NOI4.